A 283-amino-acid polypeptide reads, in one-letter code: Circadian clock oscillator protein KaiA (283 aa).

The segment at 1–146 (MAQSTALTIC…LFRLPALKES (146 aa)) is psR domain, not required to form KaiA:KaiB:KaiC complex, or for a full KaiC phosphorylation cycle. The KaiA N-terminal domain occupies 3–163 (QSTALTICGL…RLSQKLKERL (161 aa)). Residues 164–172 (GYLGVYYKR) are flexible linker. The KaiA C-terminal domain occupies 173–281 (DTAFFFRRMS…CEMYRRSIPR (109 aa)).

Belongs to the KaiA family. Homodimer. The KaiABC complex composition changes during the circadian cycle to control KaiC phosphorylation. Complexes KaiC(6), KaiA(2-4):KaiC(6), KaiB(6):KaiC(6) and KaiC(6):KaiB(6):KaiA(12) are among the most important forms, many form cooperatively. Binds to KaiB and KaiC, the N-terminus (pseudoreceiver domain PsR) is not required for either interaction. 1 KaiB binds to one subunit of the KaiA homodimer. KaiA and CikA bind to the same region of the KaiB(fs) form and therefore compete.

In terms of biological role, key component of the KaiABC oscillator complex, which constitutes the main circadian regulator in cyanobacteria. Complex composition changes during the circadian cycle to control KaiC phosphorylation. KaiA stimulates KaiC autophosphorylation, while KaiB sequesters KaiA, leading to KaiC autodephosphorylation. KaiA binding to the KaiC CII domain during the subjective day yields KaiA(2-4):KaiC(6) complexes which stimulate KaiC autophosphorylation. Phospho-Ser-431 KaiC accumulation triggers binding of KaiB during the subjective night to form the KaiB(6):KaiC(6) complex, leading to changes in the output regulators CikA and SasA. KaiB(6):KaiC(6) formation exposes a site for KaiA binding on KaiB that sequesters KaiA from KaiC's CII domain, making the KaiC(6):KaiB(6):KaiA(12) complex resulting in KaiC autodephosphorylation. Complete dephosphorylation of KaiC leads to dissociation of KaiA(2):KaiB(1), completing 1 cycle of the Kai oscillator. Formation of the KaiB:KaiC complex is promoted by KaiA, helping switch KaiC from its autophosphorylation to autodephosphatase function. Functionally, binds oxidized quinones via the N-terminal PsR domain, allowing it to sense redox changes and possibly mediate clock input. The chain is Circadian clock oscillator protein KaiA from Thermosynechococcus vestitus (strain NIES-2133 / IAM M-273 / BP-1).